Here is a 635-residue protein sequence, read N- to C-terminus: 3-dehydroshikimate dehydratase (635 aa).

A divalent metal cation is bound by residues Glu-134, Asp-165, Gln-191, and Glu-239. 2 VOC domains span residues 295 to 414 (GVEF…LVEQ) and 440 to 590 (RIDH…VYTE). Mg(2+)-binding residues include His-443, His-521, and Glu-599.

The protein belongs to the bacterial two-domain DSD family. Homodimer. Co(2+) is required as a cofactor. It depends on Ni(2+) as a cofactor. Mg(2+) serves as cofactor. The cofactor is Mn(2+).

The catalysed reaction is 3-dehydroshikimate = 3,4-dihydroxybenzoate + H2O. Its pathway is aromatic compound metabolism; 3,4-dihydroxybenzoate biosynthesis. Its function is as follows. Catalyzes the conversion of 3-dehydroshikimate to protocatechuate (3,4-dihydroxybenzoate), a common intermediate of quinate and shikimate degradation pathways. The sequence is that of 3-dehydroshikimate dehydratase from Pseudomonas putida (strain ATCC 47054 / DSM 6125 / CFBP 8728 / NCIMB 11950 / KT2440).